We begin with the raw amino-acid sequence, 137 residues long: MAEATQKVSIVTPERVIYGDEARFVHVRGTDGDLGFLPGHTPLISSLRPGLLRIQKEGQWSTFVVAGGFVEVRDSRVVVLANAAERPEEIDLARAEKAKERAEKRLAAKDPEIDVVRAKAALARAVARIEAAGQIKR.

This sequence belongs to the ATPase epsilon chain family. In terms of assembly, F-type ATPases have 2 components, CF(1) - the catalytic core - and CF(0) - the membrane proton channel. CF(1) has five subunits: alpha(3), beta(3), gamma(1), delta(1), epsilon(1). CF(0) has three main subunits: a, b and c.

It is found in the cell membrane. In terms of biological role, produces ATP from ADP in the presence of a proton gradient across the membrane. The chain is ATP synthase epsilon chain from Desulforudis audaxviator (strain MP104C).